The primary structure comprises 145 residues: Ubiquitin-conjugating enzyme E2 variant 1C (145 aa).

The UBC core domain maps to 12–145 (PRNFRLLEEL…LVQPPEGTFF (134 aa)).

The protein belongs to the ubiquitin-conjugating enzyme family. As to quaternary structure, heterodimer with UBC35 or UBC36. Expressed in roots, shoots, leaves, stems and flowers, but not in pollen.

Has no ubiquitin ligase activity on its own. The heterodimer with UBC catalyzes the synthesis of non-canonical poly-ubiquitin chains that are linked through 'Lys-63'. This type of poly-ubiquitination does not lead to protein degradation by the proteasome. Mediates transcriptional activation of target genes. May play a role in the control of progress through the cell cycle and differentiation. May play a role in the error-free DNA repair pathway and contributes to the survival of cells after DNA damage. This Arabidopsis thaliana (Mouse-ear cress) protein is Ubiquitin-conjugating enzyme E2 variant 1C (UEV1C).